A 537-amino-acid polypeptide reads, in one-letter code: MDYQDDGLGEMIEFLEDKLYYTSLSQPPKAELYPHMHFFTIDDELIYNPFYHDFGPLNVSHLIRFAVIVHGIMGKHRQAKKSKAIVLYSSTDTRLRANAACLLACYMVLVQNWPPHLALAPLAQAEPPFLGFRDAGYAVSDYYITIQDCVYGLWRARESSILNIRNIDVHDYETYERVENGDFNWISPKFIAFASPIQAGWNHASTRPKKLPQPFAIVLDYFVANKVKLIVRLNGPLYDKKTFENVGIRHKEMYFEDGTVPELSLVKEFIDLTEEVEEDGVIAVHCKAGLGRTGCLIGAYLIYKHCFTANEVIAYMRIMRPGMVVGPQQHWLHINQVHFRAYFYEKAMGRAIQQATAAEPLATPPRHPLNATNGTSQSNISTPLPEPTPGQPRKVSGHNPPSARRLPSASSVKFNEKLKNASKQSIQNENKASYSSYEDSEIQNDDETRTVGTPTETISVVRLRRSSSQSNIEPNGVRSPTSSPTGSPIRRTSGNRWSSGSSHSKKSAQRSVSMSSLNNTSNGRVAKPKPSKSRLIS.

The region spanning 182 to 345 is the Tyrosine-protein phosphatase domain; it reads DFNWISPKFI…QVHFRAYFYE (164 aa). Cys286 functions as the Phosphocysteine intermediate in the catalytic mechanism. A disordered region spans residues 359–537; it reads EPLATPPRHP…PKPSKSRLIS (179 aa). A compositionally biased stretch (polar residues) spans 370-382; it reads NATNGTSQSNIST. Positions 400–411 are enriched in low complexity; it reads PPSARRLPSASS. The segment covering 421-437 has biased composition (polar residues); the sequence is ASKQSIQNENKASYSSY. Thr453 carries the post-translational modification Phosphothreonine. 2 positions are modified to phosphoserine: Ser468 and Ser470. Residues 490-502 show a composition bias toward low complexity; the sequence is RRTSGNRWSSGSS. Ser513 is subject to Phosphoserine. Positions 514-523 are enriched in polar residues; the sequence is MSSLNNTSNG. The span at 526-537 shows a compositional bias: basic residues; the sequence is AKPKPSKSRLIS.

The protein belongs to the protein-tyrosine phosphatase family. Non-receptor class CDC14 subfamily. As to quaternary structure, interacts with ark1 at the kinetochores. Interacts with bir1, cdc25, mid1, nbl1, pic1, and rad24. Post-translationally, phosphorylated by cds1, chk1, pmk1, and cdc2 upon Hydroxylurea and H(2)O(2) stress treatment. Phosphorylation regulates the nucleolar-to-nucleoplasmic transition. Is able to autodephosphorylate.

The protein resides in the nucleus. It localises to the nucleolus. The protein localises to the cytoplasm. Its subcellular location is the cytoskeleton. It is found in the microtubule organizing center. The protein resides in the spindle pole body. The enzyme catalyses O-phospho-L-tyrosyl-[protein] + H2O = L-tyrosyl-[protein] + phosphate. Functionally, protein phosphatase which antagonizes mitotic cyclin-dependent kinase cdc2, the inactivation of which is essential for exit from mitosis. To access its substrates, is released from nucleolar sequestration during mitosis. Plays an essential in coordinating the nuclear division cycle with cytokinesis through the cytokinesis checkpoint. Involved in chromosome segregation, where it is required for meiosis I spindle dissambly as well as for establishing two consecutive chromosome segregation phases. Allows damaged actomyosin rings to be maintained to facilitate completion of cell division in response to minor perturbation of the cell division machinery. Dephosphorylates the mitotic inducer cdc25 for its rapid degradation. Down-regulation of cdc25 activity ensures a prompt inactivation of mitotic cdc2 complexes to trigger cell division. Also dephosphorylates cdc2-phosphorylated nsk1, allowing nsk1-binding to kinetochores and spindle. Dephosphorylates ase1, which is essential for spindle midzone assembly and for continuous extension of the anaphase spindle. Tethered to the contractile ring by mid1, where it dephosphorylates cdc15. This Schizosaccharomyces pombe (strain 972 / ATCC 24843) (Fission yeast) protein is Tyrosine-protein phosphatase CDC14 homolog (clp1).